The following is a 435-amino-acid chain: WD repeat domain phosphoinositide-interacting protein 2 (435 aa).

The WD 1 repeat unit spans residues 182–222; the sequence is AHDSPLAALAFDASGTKLATASEKGTVIRVFSIPEGQKLFE. A L/FRRG motif motif is present at residues 223-226; the sequence is FRRG. WD repeat units follow at residues 228–267 and 311–349; these read KRCV…EKPP and GHKN…GGEC. The disordered stretch occupies residues 386-435; sequence VTKTYPPPSPTRHAYADDLGAVGGASEEDEMGNLRLDEDNENPPMILQTE.

This sequence belongs to the WD repeat PROPPIN family.

It localises to the preautophagosomal structure membrane. Functionally, component of the autophagy machinery that controls the major intracellular degradation process by which cytoplasmic materials are packaged into autophagosomes and delivered to lysosomes for degradation. Involved in an early step of the formation of preautophagosomal structures. The protein is WD repeat domain phosphoinositide-interacting protein 2 (wipi2) of Xenopus laevis (African clawed frog).